Consider the following 102-residue polypeptide: MGKTGSVEHTKQRIESELMPPSMYKVILNNDDYTPMDFVIEVLARFFDKHEPQATDIMLTIHHQGKGICGVYPFGIAETKVLQVNQFARENQHPLLCTLEKA.

Belongs to the ClpS family. In terms of assembly, binds to the N-terminal domain of the chaperone ClpA.

Involved in the modulation of the specificity of the ClpAP-mediated ATP-dependent protein degradation. The polypeptide is ATP-dependent Clp protease adapter protein ClpS (Shewanella denitrificans (strain OS217 / ATCC BAA-1090 / DSM 15013)).